A 249-amino-acid polypeptide reads, in one-letter code: ATP synthase subunit a (249 aa).

Transmembrane regions (helical) follow at residues 30–50 (SAYM…GVAG), 84–104 (FFPL…VGII), 114–134 (LIVT…YGFY), 143–163 (IFVP…IEVF), 196–216 (LLAG…GMVI), and 221–241 (LELL…CIYL).

This sequence belongs to the ATPase A chain family. In terms of assembly, F-type ATPases have 2 components, CF(1) - the catalytic core - and CF(0) - the membrane proton channel. CF(1) has five subunits: alpha(3), beta(3), gamma(1), delta(1), epsilon(1). CF(0) has four main subunits: a, b, b' and c.

It is found in the cell inner membrane. In terms of biological role, key component of the proton channel; it plays a direct role in the translocation of protons across the membrane. This Rhodopseudomonas palustris (strain BisB18) protein is ATP synthase subunit a.